The sequence spans 227 residues: Cytochrome c oxidase subunit 2 (227 aa).

Topologically, residues 1–14 are mitochondrial intermembrane; it reads MAHPFQTGLQDATS. Residues 15–45 traverse the membrane as a helical segment; it reads PIMEELLHFHDHTLMIVFLISSLVLYIISIM. Residues 46 to 59 are Mitochondrial matrix-facing; that stretch reads LTTKLTHTNTMDAQ. Residues 60–87 form a helical membrane-spanning segment; sequence EVETVWTILPAIILIMIALPSLRILYMM. Residues 88–227 are Mitochondrial intermembrane-facing; the sequence is DEINNPSLTV…YFEKWSASML (140 aa). Residues H161, C196, E198, C200, H204, and M207 each contribute to the Cu cation site. E198 contributes to the Mg(2+) binding site. Residue Y218 is modified to Phosphotyrosine.

It belongs to the cytochrome c oxidase subunit 2 family. Component of the cytochrome c oxidase (complex IV, CIV), a multisubunit enzyme composed of 14 subunits. The complex is composed of a catalytic core of 3 subunits MT-CO1, MT-CO2 and MT-CO3, encoded in the mitochondrial DNA, and 11 supernumerary subunits COX4I, COX5A, COX5B, COX6A, COX6B, COX6C, COX7A, COX7B, COX7C, COX8 and NDUFA4, which are encoded in the nuclear genome. The complex exists as a monomer or a dimer and forms supercomplexes (SCs) in the inner mitochondrial membrane with NADH-ubiquinone oxidoreductase (complex I, CI) and ubiquinol-cytochrome c oxidoreductase (cytochrome b-c1 complex, complex III, CIII), resulting in different assemblies (supercomplex SCI(1)III(2)IV(1) and megacomplex MCI(2)III(2)IV(2)). Found in a complex with TMEM177, COA6, COX18, COX20, SCO1 and SCO2. Interacts with TMEM177 in a COX20-dependent manner. Interacts with COX20. Interacts with COX16. Requires Cu cation as cofactor.

The protein localises to the mitochondrion inner membrane. It catalyses the reaction 4 Fe(II)-[cytochrome c] + O2 + 8 H(+)(in) = 4 Fe(III)-[cytochrome c] + 2 H2O + 4 H(+)(out). Functionally, component of the cytochrome c oxidase, the last enzyme in the mitochondrial electron transport chain which drives oxidative phosphorylation. The respiratory chain contains 3 multisubunit complexes succinate dehydrogenase (complex II, CII), ubiquinol-cytochrome c oxidoreductase (cytochrome b-c1 complex, complex III, CIII) and cytochrome c oxidase (complex IV, CIV), that cooperate to transfer electrons derived from NADH and succinate to molecular oxygen, creating an electrochemical gradient over the inner membrane that drives transmembrane transport and the ATP synthase. Cytochrome c oxidase is the component of the respiratory chain that catalyzes the reduction of oxygen to water. Electrons originating from reduced cytochrome c in the intermembrane space (IMS) are transferred via the dinuclear copper A center (CU(A)) of subunit 2 and heme A of subunit 1 to the active site in subunit 1, a binuclear center (BNC) formed by heme A3 and copper B (CU(B)). The BNC reduces molecular oxygen to 2 water molecules using 4 electrons from cytochrome c in the IMS and 4 protons from the mitochondrial matrix. This Ailuropoda melanoleuca (Giant panda) protein is Cytochrome c oxidase subunit 2 (MT-CO2).